The chain runs to 194 residues: Imidazoleglycerol-phosphate dehydratase (194 aa).

Belongs to the imidazoleglycerol-phosphate dehydratase family.

It localises to the cytoplasm. It catalyses the reaction D-erythro-1-(imidazol-4-yl)glycerol 3-phosphate = 3-(imidazol-4-yl)-2-oxopropyl phosphate + H2O. The protein operates within amino-acid biosynthesis; L-histidine biosynthesis; L-histidine from 5-phospho-alpha-D-ribose 1-diphosphate: step 6/9. This Caldanaerobacter subterraneus subsp. tengcongensis (strain DSM 15242 / JCM 11007 / NBRC 100824 / MB4) (Thermoanaerobacter tengcongensis) protein is Imidazoleglycerol-phosphate dehydratase.